We begin with the raw amino-acid sequence, 208 residues long: Large ribosomal subunit protein uL3 (208 aa).

Gln-149 bears the N5-methylglutamine mark.

This sequence belongs to the universal ribosomal protein uL3 family. Part of the 50S ribosomal subunit. Forms a cluster with proteins L14 and L19. Post-translationally, methylated by PrmB.

Its function is as follows. One of the primary rRNA binding proteins, it binds directly near the 3'-end of the 23S rRNA, where it nucleates assembly of the 50S subunit. In Histophilus somni (strain 129Pt) (Haemophilus somnus), this protein is Large ribosomal subunit protein uL3.